The following is a 579-amino-acid chain: V-type ATP synthase alpha chain (579 aa).

Residue 238 to 245 (GPFGAGKT) participates in ATP binding.

It belongs to the ATPase alpha/beta chains family.

The catalysed reaction is ATP + H2O + 4 H(+)(in) = ADP + phosphate + 5 H(+)(out). Its function is as follows. Produces ATP from ADP in the presence of a proton gradient across the membrane. The V-type alpha chain is a catalytic subunit. The polypeptide is V-type ATP synthase alpha chain (Borrelia hermsii (strain HS1 / DAH)).